Here is a 396-residue protein sequence, read N- to C-terminus: Flavohemoprotein (396 aa).

Residues 1–136 (MLDAQTIATV…LANVFIHREA (136 aa)) enclose the Globin domain. H85 lines the heme b pocket. Active-site charge relay system residues include Y95 and E135. The tract at residues 147-396 (GGWEGTRPFR…YECFGPHKVL (250 aa)) is reductase. In terms of domain architecture, FAD-binding FR-type spans 150–255 (EGTRPFRIVA…AAPAGDFFMN (106 aa)). Residues Y188 and 204 to 207 (RQYS) each bind FAD. NADP(+) is bound at residue 268–273 (GVGQTP). Position 389–392 (389–392 (CFGP)) interacts with FAD.

It belongs to the globin family. Two-domain flavohemoproteins subfamily. The protein in the C-terminal section; belongs to the flavoprotein pyridine nucleotide cytochrome reductase family. Heme b serves as cofactor. Requires FAD as cofactor.

The enzyme catalyses 2 nitric oxide + NADPH + 2 O2 = 2 nitrate + NADP(+) + H(+). The catalysed reaction is 2 nitric oxide + NADH + 2 O2 = 2 nitrate + NAD(+) + H(+). In terms of biological role, is involved in NO detoxification in an aerobic process, termed nitric oxide dioxygenase (NOD) reaction that utilizes O(2) and NAD(P)H to convert NO to nitrate, which protects the bacterium from various noxious nitrogen compounds. Therefore, plays a central role in the inducible response to nitrosative stress. This is Flavohemoprotein from Salmonella typhi.